Reading from the N-terminus, the 192-residue chain is E3 ubiquitin-protein ligase RNF185 (192 aa).

A compositionally biased stretch (low complexity) spans 1-27; the sequence is MASKGPSASASPENSSAGGPSGSSNGA. The interval 1-30 is disordered; that stretch reads MASKGPSASASPENSSAGGPSGSSNGAGES. Residues 1 to 130 lie on the Cytoplasmic side of the membrane; sequence MASKGPSASA…GGFQGFGFGD (130 aa). The required for ubiquitin ligase activity and protection against ER stress-induced cell death stretch occupies residues 29-80; it reads ESGGQDSTFECNICLDTAKDAVISLCGHLFCWPCLHQWLETRPNRQVCPVCK. The segment at 39-80 adopts an RING-type zinc-finger fold; that stretch reads CNICLDTAKDAVISLCGHLFCWPCLHQWLETRPNRQVCPVCK. Positions 90 to 123 are disordered; sequence PLYGRGSTGQQDPREKTPPRPQGQRPEPENRGGF. The chain crosses the membrane as a helical span at residues 131-151; it reads GGFQMSFGIGAFPFGIFATAF. Over 152–171 the chain is Mitochondrial intermembrane; that stretch reads NINDGRPPPAVPGTPQYVDE. Residues 172–192 form a helical membrane-spanning segment; the sequence is QFLSRLFLFVALVIMFWLLIA.

Interacts with ATG5 and BNIP1. In terms of tissue distribution, ubiquitously expressed.

The protein localises to the mitochondrion outer membrane. It is found in the endoplasmic reticulum membrane. The catalysed reaction is S-ubiquitinyl-[E2 ubiquitin-conjugating enzyme]-L-cysteine + [acceptor protein]-L-lysine = [E2 ubiquitin-conjugating enzyme]-L-cysteine + N(6)-ubiquitinyl-[acceptor protein]-L-lysine.. It participates in protein modification; protein ubiquitination. In terms of biological role, E3 ubiquitin-protein ligase that regulates selective mitochondrial autophagy by mediating 'Lys-63'-linked polyubiquitination of BNIP1. Acts in the endoplasmic reticulum (ER)-associated degradation (ERAD) pathway, which targets misfolded proteins that accumulate in the endoplasmic reticulum (ER) for ubiquitination and subsequent proteasome-mediated degradation. Protects cells from ER stress-induced apoptosis. Responsible for the cotranslational ubiquitination and degradation of CFTR in the ERAD pathway. Also acts as a regulator of the innate antiviral response by catalyzing 'Lys-27'-linked polyubiquitination of CGAS at 'Lys-173' and 'Lys-384', thereby promoting CGAS cyclic GMP-AMP synthase activity. Preferentially associates with the E2 enzymes UBE2J1 and UBE2J2. This chain is E3 ubiquitin-protein ligase RNF185, found in Homo sapiens (Human).